A 414-amino-acid polypeptide reads, in one-letter code: Carboxyl-terminal-processing protease (414 aa).

The signal sequence occupies residues M1–A29. A PDZ domain is found at Y100–P184. Catalysis depends on charge relay system residues S310, D321, and K335.

The protein belongs to the peptidase S41A family.

It is found in the cellular thylakoid lumen. It catalyses the reaction The enzyme shows specific recognition of a C-terminal tripeptide, Xaa-Yaa-Zaa, in which Xaa is preferably Ala or Leu, Yaa is preferably Ala or Tyr, and Zaa is preferably Ala, but then cleaves at a variable distance from the C-terminus. A typical cleavage is -Ala-Ala-|-Arg-Ala-Ala-Lys-Glu-Asn-Tyr-Ala-Leu-Ala-Ala.. Functionally, cleavage of the 16 C-terminal residues from the D1 precursor of photosystem II (PSII). This proteolytic processing is necessary to allow the light-driven assembly of the oxygen-evolving cluster (a tetranuclear manganese), which is responsible for photosynthetic water oxidation. This is Carboxyl-terminal-processing protease (ctpA) from Picosynechococcus sp. (strain ATCC 27264 / PCC 7002 / PR-6) (Agmenellum quadruplicatum).